The following is a 117-amino-acid chain: MSNQLYVLAEQLEQAIRTSSDFQQLKQAYEAVRRDETAYRLFTNFRNLQMRLHEKQMTGAEILPEEIEQAQKAMALTQQNEKLAQLMTLEQRMSMVLSDIQQITMKPLEELYRSFAE.

This sequence belongs to the UPF0342 family.

In Geobacillus sp. (strain WCH70), this protein is UPF0342 protein GWCH70_0629.